Reading from the N-terminus, the 374-residue chain is Peptide chain release factor 2 (374 aa).

At glutamine 250 the chain carries N5-methylglutamine.

It belongs to the prokaryotic/mitochondrial release factor family. In terms of processing, methylated by PrmC. Methylation increases the termination efficiency of RF2.

The protein resides in the cytoplasm. Functionally, peptide chain release factor 2 directs the termination of translation in response to the peptide chain termination codons UGA and UAA. This chain is Peptide chain release factor 2, found in Roseobacter denitrificans (strain ATCC 33942 / OCh 114) (Erythrobacter sp. (strain OCh 114)).